The primary structure comprises 672 residues: Threonine--tRNA ligase (672 aa).

A TGS domain is found at 1 to 64; that stretch reads MTELLKISLP…EGDAELALIT (64 aa). The interval 257-566 is catalytic; it reads DHRKLGREMD…LIEHFAGRLP (310 aa). Zn(2+) is bound by residues Cys-362, His-413, and His-543.

The protein belongs to the class-II aminoacyl-tRNA synthetase family. Homodimer. It depends on Zn(2+) as a cofactor.

Its subcellular location is the cytoplasm. It carries out the reaction tRNA(Thr) + L-threonine + ATP = L-threonyl-tRNA(Thr) + AMP + diphosphate + H(+). In terms of biological role, catalyzes the attachment of threonine to tRNA(Thr) in a two-step reaction: L-threonine is first activated by ATP to form Thr-AMP and then transferred to the acceptor end of tRNA(Thr). Also edits incorrectly charged L-seryl-tRNA(Thr). In Erythrobacter litoralis (strain HTCC2594), this protein is Threonine--tRNA ligase.